A 395-amino-acid chain; its full sequence is Elongation factor Tu (395 aa).

One can recognise a tr-type G domain in the interval 10–205 (KPHVNIGTIG…CDTWIPLPPR (196 aa)). A G1 region spans residues 19-26 (GHVDHGKT). 19–26 (GHVDHGKT) is a binding site for GTP. Residue threonine 26 coordinates Mg(2+). The segment at 60 to 64 (GITIN) is G2. The G3 stretch occupies residues 81 to 84 (DCPG). GTP is bound by residues 81–85 (DCPGH) and 136–139 (NKCD). The segment at 136–139 (NKCD) is G4. The G5 stretch occupies residues 174 to 176 (SAL).

Belongs to the TRAFAC class translation factor GTPase superfamily. Classic translation factor GTPase family. EF-Tu/EF-1A subfamily. Monomer.

The protein resides in the cytoplasm. It catalyses the reaction GTP + H2O = GDP + phosphate + H(+). Functionally, GTP hydrolase that promotes the GTP-dependent binding of aminoacyl-tRNA to the A-site of ribosomes during protein biosynthesis. This chain is Elongation factor Tu, found in Parabacteroides distasonis (strain ATCC 8503 / DSM 20701 / CIP 104284 / JCM 5825 / NCTC 11152).